A 227-amino-acid polypeptide reads, in one-letter code: Cytidylate kinase (227 aa).

Residue 12–20 participates in ATP binding; it reads GPSGAGKGT.

Belongs to the cytidylate kinase family. Type 1 subfamily.

Its subcellular location is the cytoplasm. The enzyme catalyses CMP + ATP = CDP + ADP. The catalysed reaction is dCMP + ATP = dCDP + ADP. The sequence is that of Cytidylate kinase from Xanthomonas euvesicatoria pv. vesicatoria (strain 85-10) (Xanthomonas campestris pv. vesicatoria).